We begin with the raw amino-acid sequence, 311 residues long: Cytochrome f (311 aa).

An N-terminal signal peptide occupies residues 1 to 27; it reads MRRHLSLLIGSLVLGLSLLIAPAASWA. Heme-binding residues include tyrosine 28, cysteine 48, cysteine 51, and histidine 52. A helical transmembrane segment spans residues 277–297; it reads IYGLLAFFAAVALAQIMLVLK.

The protein belongs to the cytochrome f family. The 4 large subunits of the cytochrome b6-f complex are cytochrome b6, subunit IV (17 kDa polypeptide, PetD), cytochrome f and the Rieske protein, while the 4 small subunits are PetG, PetL, PetM and PetN. The complex functions as a dimer. Heme is required as a cofactor.

Its subcellular location is the cellular thylakoid membrane. In terms of biological role, component of the cytochrome b6-f complex, which mediates electron transfer between photosystem II (PSII) and photosystem I (PSI), cyclic electron flow around PSI, and state transitions. The chain is Cytochrome f from Parasynechococcus marenigrum (strain WH8102).